An 805-amino-acid polypeptide reads, in one-letter code: RFX-like transcription factor daf-19 (805 aa).

Residues 1–14 (MTNEEPVPSTSSVL) are compositionally biased toward polar residues. The tract at residues 1–113 (MTNEEPVPST…TPRKKMEPED (113 aa)) is disordered. Residues 19 to 92 (KNVKIETPSR…DSKSLSKETH (74 aa)) show a composition bias toward basic and acidic residues. The span at 93–104 (NTISTRSSSSGT) shows a compositional bias: polar residues. The RFX-type winged-helix DNA-binding region spans 260–334 (TVNWLFENYE…YHYYGIRLKD (75 aa)).

Belongs to the RFX family. As to expression, ciliated sensory neurons. Expressed in the male tail HOB and RnB neurons but not in male-specific CEM head neurons or other ciliated neurons.

The protein resides in the nucleus. Probable transcription factor. May regulate some genes of ciliated sensory neurons. May activate the expression of the shared components of sensory cilia, but not the cell-type-specific expression. Together with transcription factor atf-7, involved in regulation of the serotonergic response of ADF neurons to pathogenic food. Functionally, involved in male mating behavior; may play a role in functional specialization of PKD ciliated sensory neurons. This is RFX-like transcription factor daf-19 from Caenorhabditis elegans.